A 729-amino-acid chain; its full sequence is Glycine--tRNA ligase, mitochondrial 1 (729 aa).

The residue at position 1 (methionine 1) is an N-acetylmethionine. A mitochondrion-targeting transit peptide spans 1 to 28; that stretch reads MRIFSTFVFHRRQQIFNLRQFQTTTILR. Residues 50–106 enclose the WHEP-TRS domain; that stretch reads SLSEKSSSVEAQGNAVRALKASRAAKPEIDAAIEQLNKLKLEKSTVEKELQSIISSS. Glutamate 296 is a binding site for glycine. ATP-binding positions include 328–330 and 339–340; these read RNE and RV. Glutamate 347 is a glycine binding site. 454-455 contributes to the ATP binding site; the sequence is EC. 575 to 577 provides a ligand contact to glycine; the sequence is EPS. Arginine 582 provides a ligand contact to ATP.

This sequence belongs to the class-II aminoacyl-tRNA synthetase family. In terms of assembly, homodimer.

The protein resides in the mitochondrion. Its subcellular location is the cytoplasm. The protein localises to the cytosol. The catalysed reaction is tRNA(Gly) + glycine + ATP = glycyl-tRNA(Gly) + AMP + diphosphate. It catalyses the reaction 2 ATP + H(+) = P(1),P(4)-bis(5'-adenosyl) tetraphosphate + diphosphate. In terms of biological role, catalyzes the ATP-dependent ligation of glycine to the 3'-end of its cognate tRNA, via the formation of an aminoacyl-adenylate intermediate (Gly-AMP). Also produces diadenosine tetraphosphate (Ap4A), a universal pleiotropic signaling molecule needed for cell regulation pathways, by direct condensation of 2 ATPs. Thereby, may play a special role in Ap4A homeostasis. The protein is Glycine--tRNA ligase, mitochondrial 1 of Arabidopsis thaliana (Mouse-ear cress).